A 383-amino-acid chain; its full sequence is Lipid-A-disaccharide synthase (383 aa).

The protein belongs to the LpxB family.

It carries out the reaction a lipid X + a UDP-2-N,3-O-bis[(3R)-3-hydroxyacyl]-alpha-D-glucosamine = a lipid A disaccharide + UDP + H(+). Its pathway is bacterial outer membrane biogenesis; LPS lipid A biosynthesis. In terms of biological role, condensation of UDP-2,3-diacylglucosamine and 2,3-diacylglucosamine-1-phosphate to form lipid A disaccharide, a precursor of lipid A, a phosphorylated glycolipid that anchors the lipopolysaccharide to the outer membrane of the cell. The protein is Lipid-A-disaccharide synthase of Aliivibrio salmonicida (strain LFI1238) (Vibrio salmonicida (strain LFI1238)).